The sequence spans 173 residues: MEKPVVLGTLGTVYGIKGWLKVNSFTDVAEAIFDYNPWMINQNGVWRELKVSAWKRHNKGLICKIDGIDLREDALALTNVEIGVPADLLPALPEGEFYWRDLIGCSVSTTKGYDLGKVTELMETGSNDVLVVEANVKDAFGAKERLIPFLEEQVIKHIDLTARTIEVDWDPGF.

A PRC barrel domain is found at 94–173 (EGEFYWRDLI…TIEVDWDPGF (80 aa)).

It belongs to the RimM family. As to quaternary structure, binds ribosomal protein uS19.

It is found in the cytoplasm. Its function is as follows. An accessory protein needed during the final step in the assembly of 30S ribosomal subunit, possibly for assembly of the head region. Essential for efficient processing of 16S rRNA. May be needed both before and after RbfA during the maturation of 16S rRNA. It has affinity for free ribosomal 30S subunits but not for 70S ribosomes. The protein is Ribosome maturation factor RimM of Aeromonas salmonicida (strain A449).